Reading from the N-terminus, the 355-residue chain is Phosphoserine aminotransferase (355 aa).

L-glutamate is bound at residue Arg-41. Residues 75–76, Trp-99, Thr-147, Asp-166, and Gln-189 contribute to the pyridoxal 5'-phosphate site; that span reads AS. Lys-190 carries the N6-(pyridoxal phosphate)lysine modification. Residue 231 to 232 participates in pyridoxal 5'-phosphate binding; it reads NT.

It belongs to the class-V pyridoxal-phosphate-dependent aminotransferase family. SerC subfamily. In terms of assembly, homodimer. It depends on pyridoxal 5'-phosphate as a cofactor.

It is found in the cytoplasm. The enzyme catalyses O-phospho-L-serine + 2-oxoglutarate = 3-phosphooxypyruvate + L-glutamate. It catalyses the reaction 4-(phosphooxy)-L-threonine + 2-oxoglutarate = (R)-3-hydroxy-2-oxo-4-phosphooxybutanoate + L-glutamate. It functions in the pathway amino-acid biosynthesis; L-serine biosynthesis; L-serine from 3-phospho-D-glycerate: step 2/3. It participates in cofactor biosynthesis; pyridoxine 5'-phosphate biosynthesis; pyridoxine 5'-phosphate from D-erythrose 4-phosphate: step 3/5. Functionally, catalyzes the reversible conversion of 3-phosphohydroxypyruvate to phosphoserine and of 3-hydroxy-2-oxo-4-phosphonooxybutanoate to phosphohydroxythreonine. This chain is Phosphoserine aminotransferase, found in Parabacteroides distasonis (strain ATCC 8503 / DSM 20701 / CIP 104284 / JCM 5825 / NCTC 11152).